A 118-amino-acid chain; its full sequence is Ribosome-binding factor A (118 aa).

It belongs to the RbfA family. Monomer. Binds 30S ribosomal subunits, but not 50S ribosomal subunits or 70S ribosomes.

Its subcellular location is the cytoplasm. In terms of biological role, one of several proteins that assist in the late maturation steps of the functional core of the 30S ribosomal subunit. Associates with free 30S ribosomal subunits (but not with 30S subunits that are part of 70S ribosomes or polysomes). Required for efficient processing of 16S rRNA. May interact with the 5'-terminal helix region of 16S rRNA. This chain is Ribosome-binding factor A, found in Bacillus cereus (strain AH820).